The chain runs to 255 residues: Putative oxidoreductase YtkK (255 aa).

7–14 (TAGSKGLG) serves as a coordination point for NAD(+).

This sequence belongs to the short-chain dehydrogenases/reductases (SDR) family.

This chain is Putative oxidoreductase YtkK (ytkK), found in Bacillus subtilis (strain 168).